A 512-amino-acid chain; its full sequence is Kelch repeat protein C2 (512 aa).

In terms of domain architecture, BTB spans 2–67 (ESVIFSINGE…IRWKKINITI (66 aa)). Kelch repeat units follow at residues 216–261 (IKHN…LHNC), 262–307 (LYII…VNNG), 309–354 (LYVI…FVND), 356–403 (IYVM…EYDG), 405–449 (IYVI…SCGD), and 452–498 (LIIA…THKS).

It belongs to the poxviruses Kelch family.

This chain is Kelch repeat protein C2, found in Homo sapiens (Human).